The following is a 1498-amino-acid chain: DNA-directed RNA polymerase subunit beta' (1498 aa).

Residues C67, C69, C82, and C85 each contribute to the Zn(2+) site. Residues D499, D501, and D503 each contribute to the Mg(2+) site. Residues C867, C943, C950, and C953 each contribute to the Zn(2+) site.

It belongs to the RNA polymerase beta' chain family. As to quaternary structure, the RNAP catalytic core consists of 2 alpha, 1 beta, 1 beta' and 1 omega subunit. When a sigma factor is associated with the core the holoenzyme is formed, which can initiate transcription. It depends on Mg(2+) as a cofactor. Zn(2+) serves as cofactor.

The catalysed reaction is RNA(n) + a ribonucleoside 5'-triphosphate = RNA(n+1) + diphosphate. Functionally, DNA-dependent RNA polymerase catalyzes the transcription of DNA into RNA using the four ribonucleoside triphosphates as substrates. This is DNA-directed RNA polymerase subunit beta' from Chlorobium luteolum (strain DSM 273 / BCRC 81028 / 2530) (Pelodictyon luteolum).